A 35-amino-acid chain; its full sequence is Photosystem II reaction center protein M (35 aa).

The residue at position 1 (M1) is an N-formylmethionine. The helical transmembrane segment at 7-28 (GFIASILFVLVPTVFLLILFIQ) threads the bilayer.

The protein belongs to the PsbM family. PSII is composed of 1 copy each of membrane proteins PsbA, PsbB, PsbC, PsbD, PsbE, PsbF, PsbH, PsbI, PsbJ, PsbK, PsbL, PsbM, PsbT, PsbX, PsbY, PsbZ, Psb30/Ycf12, peripheral proteins PsbO, CyanoQ (PsbQ), PsbU, PsbV and a large number of cofactors. It forms dimeric complexes.

It is found in the cellular thylakoid membrane. Its function is as follows. One of the components of the core complex of photosystem II (PSII). PSII is a light-driven water:plastoquinone oxidoreductase that uses light energy to abstract electrons from H(2)O, generating O(2) and a proton gradient subsequently used for ATP formation. It consists of a core antenna complex that captures photons, and an electron transfer chain that converts photonic excitation into a charge separation. This subunit is found at the monomer-monomer interface. Involved in assembly of monomeric PSII from the CP43-less intermediate. This chain is Photosystem II reaction center protein M, found in Synechocystis sp. (strain ATCC 27184 / PCC 6803 / Kazusa).